The primary structure comprises 221 residues: uncharacterized protein (221 aa).

An N-terminal signal peptide occupies residues 1–26 (MVRLVPRAFAATVALLAAGFSPATAS).

This is an uncharacterized protein from Mycobacterium tuberculosis (strain ATCC 25618 / H37Rv).